The chain runs to 472 residues: Nucleoporin NUP49/NSP49 (472 aa).

The stretch at F2–G3 is one FG 1 repeat. The stretch at G14–G17 is one GLFG 1 repeat. Positions N28–G104 are disordered. The FG 2 repeat unit spans residues F33 to G34. The stretch at G48–G51 is one GLFG 2 repeat. A compositionally biased stretch (low complexity) spans S64–S80. FG repeat units follow at residues F65–G66 and F77–G78. 2 GLFG repeats span residues G86 to G89 and G101 to G104. The SLFG 1 repeat unit spans residues S113 to G116. 2 GLFG repeats span residues G125–G128 and G148–G151. The SLFG 2 repeat unit spans residues S159–G162. A GLFG 7; approximate repeat occupies G175 to G178. An SLFG 3 repeat occupies S185–G188. One copy of the GLFG 8 repeat lies at G199–G202. Residues S210 to G213 form an SLFG 4 repeat. The interval L211 to L242 is disordered. Low complexity predominate over residues S214–N226. One copy of the GLFG 9 repeat lies at G233–G236.

This sequence belongs to the nucleoporin GLFG family. Component of the nuclear pore complex (NPC). NPC constitutes the exclusive means of nucleocytoplasmic transport. NPCs allow the passive diffusion of ions and small molecules and the active, nuclear transport receptor-mediated bidirectional transport of macromolecules such as proteins, RNAs, ribonucleoparticles (RNPs), and ribosomal subunits across the nuclear envelope. Due to its 8-fold rotational symmetry, all subunits are present with 8 copies or multiples thereof. NUP49 is part of the NUP57 subcomplex (NIC96, NSP1, NUP49, NUP57) interacting with NUP57. Interacts through its FG repeats with karyopherins.

It is found in the nucleus. It localises to the nuclear pore complex. Its subcellular location is the nucleus membrane. Functionally, functions as a component of the nuclear pore complex (NPC). NPC components, collectively referred to as nucleoporins (NUPs), can play the role of both NPC structural components and of docking or interaction partners for transiently associated nuclear transport factors. Active directional transport is assured by both, a Phe-Gly (FG) repeat affinity gradient for these transport factors across the NPC and a transport cofactor concentration gradient across the nuclear envelope (GSP1 and GSP2 GTPases associated predominantly with GTP in the nucleus, with GDP in the cytoplasm). NUP49 plays an important role in several nuclear transport pathways including poly(A)+ RNA, tRNA, and pre-ribosome transport. In Saccharomyces cerevisiae (strain ATCC 204508 / S288c) (Baker's yeast), this protein is Nucleoporin NUP49/NSP49 (NUP49).